The sequence spans 275 residues: 18S rRNA (guanine(1575)-N(7))-methyltransferase (275 aa).

Residues 256-275 (RGRKVAKDSKFTGRKRRHRF) are disordered. Positions 257–264 (GRKVAKDS) match the Nuclear localization signal motif.

It belongs to the class I-like SAM-binding methyltransferase superfamily. BUD23/WBSCR22 family. Interacts with TRM112. Interacts with ECM16.

The protein resides in the cytoplasm. It is found in the nucleus. It catalyses the reaction guanosine(1575) in yeast 18S rRNA + S-adenosyl-L-methionine = N(7)-methylguanosine(1575) in yeast 18S rRNA + S-adenosyl-L-homocysteine. Its function is as follows. S-adenosyl-L-methionine-dependent methyltransferase that specifically methylates the N(7) position of guanine 1575 (m7G1575) in 18S rRNA. Requires the methyltransferase adapter protein TRM112 for full rRNA methyltransferase activity. Important for biogenesis end export of the 40S ribosomal subunit independent on its methyltransferase activity. Required for efficient cleavage of the primary 35S precursor rRNA at site A2. Involved in positioning the proximal bud pole signal. The polypeptide is 18S rRNA (guanine(1575)-N(7))-methyltransferase (BUD23) (Saccharomyces cerevisiae (strain ATCC 204508 / S288c) (Baker's yeast)).